Reading from the N-terminus, the 103-residue chain is Protein SUP-1 (103 aa).

The signal sequence occupies residues 1–16; the sequence is MMSYIALAACIGLAMA. The Extracellular segment spans residues 17 to 75; it reads ANVDHDVKSAVNEVTTTKDGDTYCPVPLVGTKCGTSSIFHYWKCCGELNKECCFNLQTW. Residues 76–96 traverse the membrane as a helical segment; sequence VWVTLALFGVIFIASFVISLV. Residues 97–103 lie on the Cytoplasmic side of the membrane; that stretch reads RCICCRK.

Expressed in a subset of neurons and in body wall muscles. In the nervous system, expressed specifically in cholinergic motor neurons of the ventral nerve cord, a subset of cholinergic head neurons, anterior sublateral neurons, and body sublateral neurons (at protein level).

The protein localises to the cell membrane. It is found in the perikaryon. It localises to the cell projection. The protein resides in the synapse. Its subcellular location is the cytoplasmic vesicle. The protein localises to the secretory vesicle. It is found in the synaptic vesicle. May be involved in trafficking or stabilization of the vesicular acetylcholine transporter unc-17. This is Protein SUP-1 from Caenorhabditis elegans.